Reading from the N-terminus, the 493-residue chain is Probable cytosol aminopeptidase (493 aa).

Lys259 and Asp264 together coordinate Mn(2+). The active site involves Lys271. Positions 282, 341, and 343 each coordinate Mn(2+). Residue Arg345 is part of the active site.

The protein belongs to the peptidase M17 family. Mn(2+) is required as a cofactor.

It is found in the cytoplasm. The catalysed reaction is Release of an N-terminal amino acid, Xaa-|-Yaa-, in which Xaa is preferably Leu, but may be other amino acids including Pro although not Arg or Lys, and Yaa may be Pro. Amino acid amides and methyl esters are also readily hydrolyzed, but rates on arylamides are exceedingly low.. It catalyses the reaction Release of an N-terminal amino acid, preferentially leucine, but not glutamic or aspartic acids.. Presumably involved in the processing and regular turnover of intracellular proteins. Catalyzes the removal of unsubstituted N-terminal amino acids from various peptides. In Bacillus cytotoxicus (strain DSM 22905 / CIP 110041 / 391-98 / NVH 391-98), this protein is Probable cytosol aminopeptidase.